Consider the following 121-residue polypeptide: MQVGIDIIEISRIKRAYERYNRLFLKRILTESEIEWCLNKPRPFESVAVRFACKEAFAKAMGTGISGELSWQSIEILNDKEGKPTLFLKQPFNGLKSEQVKLSLSHTHEYAVAVVIIEPDK.

Positions 6 and 55 each coordinate Mg(2+).

The protein belongs to the P-Pant transferase superfamily. AcpS family. Requires Mg(2+) as cofactor.

It localises to the cytoplasm. It carries out the reaction apo-[ACP] + CoA = holo-[ACP] + adenosine 3',5'-bisphosphate + H(+). In terms of biological role, transfers the 4'-phosphopantetheine moiety from coenzyme A to a Ser of acyl-carrier-protein. This Chloroherpeton thalassium (strain ATCC 35110 / GB-78) protein is Holo-[acyl-carrier-protein] synthase.